Here is a 311-residue protein sequence, read N- to C-terminus: Tyrosine recombinase XerD (311 aa).

The Core-binding (CB) domain maps to 1–83 (MEFIAQFLEM…TIKSYYAFLI (83 aa)). The 196-residue stretch at 104-299 (KLPIILSIDQ…HTNHLKKALL (196 aa)) folds into the Tyr recombinase domain. Residues Arg-145, Lys-176, His-251, Arg-254, and His-277 contribute to the active site. The O-(3'-phospho-DNA)-tyrosine intermediate role is filled by Tyr-286.

It belongs to the 'phage' integrase family. XerD subfamily. As to quaternary structure, forms a cyclic heterotetrameric complex composed of two molecules of XerC and two molecules of XerD.

The protein resides in the cytoplasm. Functionally, site-specific tyrosine recombinase, which acts by catalyzing the cutting and rejoining of the recombining DNA molecules. The XerC-XerD complex is essential to convert dimers of the bacterial chromosome into monomers to permit their segregation at cell division. It also contributes to the segregational stability of plasmids. This chain is Tyrosine recombinase XerD, found in Rickettsia prowazekii (strain Madrid E).